Consider the following 313-residue polypeptide: Acetaldehyde dehydrogenase 3 (313 aa).

Residue Ser-13–Ile-16 participates in NAD(+) binding. The active-site Acyl-thioester intermediate is the Cys-133. Residues Ser-164 to Asn-172 and Asn-291 each bind NAD(+).

It belongs to the acetaldehyde dehydrogenase family.

It catalyses the reaction acetaldehyde + NAD(+) + CoA = acetyl-CoA + NADH + H(+). The protein is Acetaldehyde dehydrogenase 3 of Paraburkholderia xenovorans (strain LB400).